Consider the following 291-residue polypeptide: Homeobox protein knotted-1-like 7 (291 aa).

In terms of domain architecture, ELK spans E194 to I214. Positions M215–N278 form a DNA-binding region, homeobox; TALE-type.

Belongs to the TALE/KNOX homeobox family. May form heterodimeric complex with the TALE/BELL proteins. Interacts with OFP1, OFP2, OFP3, OFP4 and OFP6.

It is found in the nucleus. In terms of biological role, may be involved in secondary cell wall biosynthesis. This is Homeobox protein knotted-1-like 7 (KNAT7) from Arabidopsis thaliana (Mouse-ear cress).